The sequence spans 317 residues: Dehydrogenase/reductase SDR family member 12 (317 aa).

Residues Ser50 and Ile52 each coordinate NAD(+). Ser175 contributes to the substrate binding site. 3 residues coordinate NAD(+): Tyr201, Lys205, and Thr234. The Proton acceptor role is filled by Tyr201.

This sequence belongs to the short-chain dehydrogenases/reductases (SDR) family.

Putative oxidoreductase. This chain is Dehydrogenase/reductase SDR family member 12 (DHRS12), found in Bos taurus (Bovine).